An 864-amino-acid polypeptide reads, in one-letter code: Leucine--tRNA ligase (864 aa).

The 'HIGH' region signature appears at proline 42–histidine 52. The 'KMSKS' region motif lies at lysine 624–serine 628. An ATP-binding site is contributed by lysine 627.

This sequence belongs to the class-I aminoacyl-tRNA synthetase family.

It is found in the cytoplasm. It carries out the reaction tRNA(Leu) + L-leucine + ATP = L-leucyl-tRNA(Leu) + AMP + diphosphate. In Burkholderia mallei (strain NCTC 10229), this protein is Leucine--tRNA ligase.